The sequence spans 92 residues: Protein canopy homolog 1 (92 aa).

Belongs to the canopy family.

This Homo sapiens (Human) protein is Protein canopy homolog 1 (CNPY1).